We begin with the raw amino-acid sequence, 344 residues long: Ion-translocating oxidoreductase complex subunit D (344 aa).

The next 4 membrane-spanning stretches (helical) occupy residues 23-43 (LVLG…GPGT), 44-64 (LLNL…MLAL), 77-99 (SALV…WLTL), and 120-140 (PFNP…LEMT). T172 is modified (FMN phosphoryl threonine). 5 helical membrane-spanning segments follow: residues 198–218 (LGSA…LFLL), 222–242 (LFTW…SLLF), 252–272 (GSPL…FIVT), 285–305 (LVFG…GGYP), and 306–326 (DGVA…DYYT).

It belongs to the NqrB/RnfD family. In terms of assembly, the complex is composed of six subunits: RnfA, RnfB, RnfC, RnfD, RnfE and RnfG. It depends on FMN as a cofactor.

Its subcellular location is the cell inner membrane. Functionally, part of a membrane-bound complex that couples electron transfer with translocation of ions across the membrane. The polypeptide is Ion-translocating oxidoreductase complex subunit D (Pseudomonas aeruginosa (strain UCBPP-PA14)).